A 199-amino-acid polypeptide reads, in one-letter code: NAD(P)H quinone oxidoreductase PST3 (199 aa).

Residues 5–193 form the Flavodoxin-like domain; that stretch reads VAIIIYSLYH…EIAFIQGKSF (189 aa). FMN contacts are provided by residues 11 to 15 and 111 to 165; these read SLYHH and IFVS…SPYG.

This sequence belongs to the WrbA family. The cofactor is FMN.

The protein localises to the cell membrane. It catalyses the reaction a quinone + NADH + H(+) = a quinol + NAD(+). It carries out the reaction a quinone + NADPH + H(+) = a quinol + NADP(+). Flavodoxin-like protein (FLP) that plays a role in cell wall integrity, oxidative stress protection and virulence. FLPs act as NAD(P)H quinone oxidoreductases. Reduces ubiquinone (coenzyme Q), enabling it to serve as an antioxidant in the membrane. The sequence is that of NAD(P)H quinone oxidoreductase PST3 from Candida albicans (strain SC5314 / ATCC MYA-2876) (Yeast).